The following is a 692-amino-acid chain: UvrABC system protein C (692 aa).

Positions 16–95 (ETPGVYRFRD…IKEFDPRFNV (80 aa)) constitute a GIY-YIG domain. The UVR domain occupies 208-243 (GRYLRRLEREMRAAAEAQEYERAARLRDDIGALRRA). The tract at residues 492 to 511 (GELEEYPGAPTGDDEAPETG) is disordered.

Belongs to the UvrC family. In terms of assembly, interacts with UvrB in an incision complex.

The protein localises to the cytoplasm. The UvrABC repair system catalyzes the recognition and processing of DNA lesions. UvrC both incises the 5' and 3' sides of the lesion. The N-terminal half is responsible for the 3' incision and the C-terminal half is responsible for the 5' incision. The polypeptide is UvrABC system protein C (Parafrankia sp. (strain EAN1pec)).